The primary structure comprises 493 residues: 1-aminocyclopropane-1-carboxylate synthase CMW33 (493 aa).

Lysine 279 is subject to N6-(pyridoxal phosphate)lysine.

It belongs to the class-I pyridoxal-phosphate-dependent aminotransferase family. Homodimer. It depends on pyridoxal 5'-phosphate as a cofactor.

It carries out the reaction S-adenosyl-L-methionine = 1-aminocyclopropane-1-carboxylate + S-methyl-5'-thioadenosine + H(+). Its pathway is alkene biosynthesis; ethylene biosynthesis via S-adenosyl-L-methionine; ethylene from S-adenosyl-L-methionine: step 1/2. Its function is as follows. Catalyzes the formation of 1-aminocyclopropane-1-carboxylate, a direct precursor of ethylene in higher plants. The polypeptide is 1-aminocyclopropane-1-carboxylate synthase CMW33 (ACS1) (Cucurbita maxima (Pumpkin)).